A 75-amino-acid polypeptide reads, in one-letter code: Acyl carrier protein (75 aa).

The 75-residue stretch at 1–75 (MSVFDKVKSI…DAVNYIKENQ (75 aa)) folds into the Carrier domain. Position 35 is an O-(pantetheine 4'-phosphoryl)serine (Ser-35).

Belongs to the acyl carrier protein (ACP) family. Post-translationally, 4'-phosphopantetheine is transferred from CoA to a specific serine of apo-ACP by AcpS. This modification is essential for activity because fatty acids are bound in thioester linkage to the sulfhydryl of the prosthetic group.

Its subcellular location is the cytoplasm. Its pathway is lipid metabolism; fatty acid biosynthesis. In terms of biological role, carrier of the growing fatty acid chain in fatty acid biosynthesis. This Desulfitobacterium hafniense (strain Y51) protein is Acyl carrier protein.